The primary structure comprises 252 residues: Diphthine synthase (252 aa).

S-adenosyl-L-methionine-binding positions include Leu9, Asp85, Val88, 113 to 114 (SI), Leu165, Ala204, and His229.

The protein belongs to the diphthine synthase family. In terms of assembly, homodimer.

The catalysed reaction is 2-[(3S)-amino-3-carboxypropyl]-L-histidyl-[translation elongation factor 2] + 3 S-adenosyl-L-methionine = diphthine-[translation elongation factor 2] + 3 S-adenosyl-L-homocysteine + 3 H(+). It participates in protein modification; peptidyl-diphthamide biosynthesis. In terms of biological role, S-adenosyl-L-methionine-dependent methyltransferase that catalyzes the trimethylation of the amino group of the modified target histidine residue in translation elongation factor 2 (EF-2), to form an intermediate called diphthine. The three successive methylation reactions represent the second step of diphthamide biosynthesis. The polypeptide is Diphthine synthase (Methanocorpusculum labreanum (strain ATCC 43576 / DSM 4855 / Z)).